We begin with the raw amino-acid sequence, 105 residues long: uncharacterized protein (105 aa).

An N-acetylserine modification is found at Ser-2.

This is an uncharacterized protein from Saccharomyces cerevisiae (strain ATCC 204508 / S288c) (Baker's yeast).